The chain runs to 307 residues: Ribosomal RNA small subunit methyltransferase H (307 aa).

S-adenosyl-L-methionine is bound by residues G33–Y35, D51, F82, D96, and Q103.

Belongs to the methyltransferase superfamily. RsmH family.

It is found in the cytoplasm. It catalyses the reaction cytidine(1402) in 16S rRNA + S-adenosyl-L-methionine = N(4)-methylcytidine(1402) in 16S rRNA + S-adenosyl-L-homocysteine + H(+). Functionally, specifically methylates the N4 position of cytidine in position 1402 (C1402) of 16S rRNA. This Rickettsia massiliae (strain Mtu5) protein is Ribosomal RNA small subunit methyltransferase H.